A 488-amino-acid polypeptide reads, in one-letter code: Ribulose bisphosphate carboxylase large chain (488 aa).

Substrate contacts are provided by asparagine 127 and threonine 177. Lysine 179 acts as the Proton acceptor in catalysis. Lysine 181 is a binding site for substrate. Mg(2+) is bound by residues lysine 205, aspartate 207, and glutamate 208. At lysine 205 the chain carries N6-carboxylysine. The Proton acceptor role is filled by histidine 297. Positions 298, 330, and 382 each coordinate substrate.

Belongs to the RuBisCO large chain family. Type I subfamily. As to quaternary structure, heterohexadecamer of 8 large chains and 8 small chains. The cofactor is Mg(2+).

The protein resides in the plastid. It is found in the chloroplast. The enzyme catalyses 2 (2R)-3-phosphoglycerate + 2 H(+) = D-ribulose 1,5-bisphosphate + CO2 + H2O. It carries out the reaction D-ribulose 1,5-bisphosphate + O2 = 2-phosphoglycolate + (2R)-3-phosphoglycerate + 2 H(+). In terms of biological role, ruBisCO catalyzes two reactions: the carboxylation of D-ribulose 1,5-bisphosphate, the primary event in carbon dioxide fixation, as well as the oxidative fragmentation of the pentose substrate in the photorespiration process. Both reactions occur simultaneously and in competition at the same active site. The sequence is that of Ribulose bisphosphate carboxylase large chain from Pyropia yezoensis (Susabi-nori).